Here is a 64-residue protein sequence, read N- to C-terminus: Large ribosomal subunit protein bL33 (64 aa).

This sequence belongs to the bacterial ribosomal protein bL33 family.

This Parasynechococcus marenigrum (strain WH8102) protein is Large ribosomal subunit protein bL33.